The sequence spans 380 residues: 1-deoxy-D-xylulose 5-phosphate reductoisomerase (380 aa).

The NADPH site is built by T10, G11, S12, I13, G36, R37, N38, and N120. Residue K121 participates in 1-deoxy-D-xylulose 5-phosphate binding. E122 serves as a coordination point for NADPH. Position 146 (D146) interacts with Mn(2+). S147, E148, S172, and H195 together coordinate 1-deoxy-D-xylulose 5-phosphate. E148 lines the Mn(2+) pocket. G201 contributes to the NADPH binding site. S208, N213, K214, and E217 together coordinate 1-deoxy-D-xylulose 5-phosphate. Residue E217 participates in Mn(2+) binding.

The protein belongs to the DXR family. Mg(2+) serves as cofactor. It depends on Mn(2+) as a cofactor.

The enzyme catalyses 2-C-methyl-D-erythritol 4-phosphate + NADP(+) = 1-deoxy-D-xylulose 5-phosphate + NADPH + H(+). The protein operates within isoprenoid biosynthesis; isopentenyl diphosphate biosynthesis via DXP pathway; isopentenyl diphosphate from 1-deoxy-D-xylulose 5-phosphate: step 1/6. Its function is as follows. Catalyzes the NADPH-dependent rearrangement and reduction of 1-deoxy-D-xylulose-5-phosphate (DXP) to 2-C-methyl-D-erythritol 4-phosphate (MEP). In Listeria monocytogenes serovar 1/2a (strain ATCC BAA-679 / EGD-e), this protein is 1-deoxy-D-xylulose 5-phosphate reductoisomerase.